The following is a 197-amino-acid chain: GTP cyclohydrolase-2 (197 aa).

Residue 50–54 (RIHSE) participates in GTP binding. Residues Cys-55, Cys-66, and Cys-68 each coordinate Zn(2+). GTP contacts are provided by residues Gln-71, 93 to 95 (EGR), and Thr-115. Asp-127 acts as the Proton acceptor in catalysis. The Nucleophile role is filled by Arg-129. Positions 150 and 155 each coordinate GTP.

The protein belongs to the GTP cyclohydrolase II family. The cofactor is Zn(2+).

The catalysed reaction is GTP + 4 H2O = 2,5-diamino-6-hydroxy-4-(5-phosphoribosylamino)-pyrimidine + formate + 2 phosphate + 3 H(+). Its pathway is cofactor biosynthesis; riboflavin biosynthesis; 5-amino-6-(D-ribitylamino)uracil from GTP: step 1/4. In terms of biological role, catalyzes the conversion of GTP to 2,5-diamino-6-ribosylamino-4(3H)-pyrimidinone 5'-phosphate (DARP), formate and pyrophosphate. This is GTP cyclohydrolase-2 from Neisseria meningitidis serogroup A / serotype 4A (strain DSM 15465 / Z2491).